The primary structure comprises 228 residues: LOB domain-containing protein 30 (228 aa).

Positions 16–118 (GPCGACKFLR…TELSYLQAHL (103 aa)) constitute an LOB domain. The interval 188-228 (SNMGGGGELQALAREFIHGGQMPAQPSPGTSGSASSVIKRE) is disordered. A compositionally biased stretch (polar residues) spans 214–228 (SPGTSGSASSVIKRE).

This sequence belongs to the LOB domain-containing protein family. Expressed in roots, stems, leaves and flowers. Expressed in vascular tissues of hypocotyls, leaves, roots, developing floral organs and siliques.

In terms of biological role, involved in the positive regulation of tracheary element (TE) differentiation. Involved in a positive feedback loop that maintains or promotes NAC030/VND7 expression that regulates TE differentiation-related genes. This Arabidopsis thaliana (Mouse-ear cress) protein is LOB domain-containing protein 30 (LBD30).